A 227-amino-acid chain; its full sequence is MAYPLQMGLQDATSPIMEELLHFHDHTLMIVFLISSLVLYIISLMLTTKLTHTSTMDAQEVETVWTILPAIILILIALPSLRILYMMDEINNPSLTVKTMGHQWYWSYEYTDYEDLNFDSYMIPTQELKPGELRLLEVDNRVVLPMEMTIRMLISSEDVLHSWAVPSLGLKTDAIPGRLNQTTLMTMRPGLYYGQCSEICGSNHSFMPIVLELVPLSHFEKWSTSML.

The Mitochondrial intermembrane segment spans residues 1-14; the sequence is MAYPLQMGLQDATS. The chain crosses the membrane as a helical span at residues 15–45; the sequence is PIMEELLHFHDHTLMIVFLISSLVLYIISLM. At 46 to 59 the chain is on the mitochondrial matrix side; sequence LTTKLTHTSTMDAQ. The chain crosses the membrane as a helical span at residues 60–87; it reads EVETVWTILPAIILILIALPSLRILYMM. Over 88 to 227 the chain is Mitochondrial intermembrane; that stretch reads DEINNPSLTV…HFEKWSTSML (140 aa). Cu cation-binding residues include His-161, Cys-196, Glu-198, Cys-200, His-204, and Met-207. Position 198 (Glu-198) interacts with Mg(2+).

It belongs to the cytochrome c oxidase subunit 2 family. In terms of assembly, component of the cytochrome c oxidase (complex IV, CIV), a multisubunit enzyme composed of 14 subunits. The complex is composed of a catalytic core of 3 subunits MT-CO1, MT-CO2 and MT-CO3, encoded in the mitochondrial DNA, and 11 supernumerary subunits COX4I, COX5A, COX5B, COX6A, COX6B, COX6C, COX7A, COX7B, COX7C, COX8 and NDUFA4, which are encoded in the nuclear genome. The complex exists as a monomer or a dimer and forms supercomplexes (SCs) in the inner mitochondrial membrane with NADH-ubiquinone oxidoreductase (complex I, CI) and ubiquinol-cytochrome c oxidoreductase (cytochrome b-c1 complex, complex III, CIII), resulting in different assemblies (supercomplex SCI(1)III(2)IV(1) and megacomplex MCI(2)III(2)IV(2)). Found in a complex with TMEM177, COA6, COX18, COX20, SCO1 and SCO2. Interacts with TMEM177 in a COX20-dependent manner. Interacts with COX20. Interacts with COX16. It depends on Cu cation as a cofactor.

The protein localises to the mitochondrion inner membrane. It carries out the reaction 4 Fe(II)-[cytochrome c] + O2 + 8 H(+)(in) = 4 Fe(III)-[cytochrome c] + 2 H2O + 4 H(+)(out). Functionally, component of the cytochrome c oxidase, the last enzyme in the mitochondrial electron transport chain which drives oxidative phosphorylation. The respiratory chain contains 3 multisubunit complexes succinate dehydrogenase (complex II, CII), ubiquinol-cytochrome c oxidoreductase (cytochrome b-c1 complex, complex III, CIII) and cytochrome c oxidase (complex IV, CIV), that cooperate to transfer electrons derived from NADH and succinate to molecular oxygen, creating an electrochemical gradient over the inner membrane that drives transmembrane transport and the ATP synthase. Cytochrome c oxidase is the component of the respiratory chain that catalyzes the reduction of oxygen to water. Electrons originating from reduced cytochrome c in the intermembrane space (IMS) are transferred via the dinuclear copper A center (CU(A)) of subunit 2 and heme A of subunit 1 to the active site in subunit 1, a binuclear center (BNC) formed by heme A3 and copper B (CU(B)). The BNC reduces molecular oxygen to 2 water molecules using 4 electrons from cytochrome c in the IMS and 4 protons from the mitochondrial matrix. In Phoca vitulina (Harbor seal), this protein is Cytochrome c oxidase subunit 2 (MT-CO2).